Reading from the N-terminus, the 324-residue chain is Endochitinase 1 (324 aa).

A signal peptide spans 1–22 (MSFLQALSIFLLLLLYVVVGSA). Positions 23-64 (EQCGRQAGGALCPGGLCCSQFGWCGSTADYCTVPGCQSQCSG) constitute a Chitin-binding type-1 domain. Cystine bridges form between Cys25–Cys40, Cys34–Cys46, Cys39–Cys53, Cys58–Cys62, Cys95–Cys158, Cys170–Cys178, and Cys277–Cys309. Glu139 (proton donor) is an active-site residue. The propeptide at 318 to 324 (GVSVDSM) is removed in mature form.

The protein belongs to the glycosyl hydrolase 19 family. Chitinase class I subfamily.

It catalyses the reaction Random endo-hydrolysis of N-acetyl-beta-D-glucosaminide (1-&gt;4)-beta-linkages in chitin and chitodextrins.. Defense against chitin-containing fungal pathogens. This chain is Endochitinase 1, found in Gossypium hirsutum (Upland cotton).